The sequence spans 1371 residues: MAYSIANNPLLRKNFAKIHKIIDIPNLIDIQKNSYKRFLQLDTPVDARKNSGLEAVFRSVFPIRDFSDTASLEYVSYSLGAPKYDVEECHQRGMTFAAPMKVKVRLVVWDVAKDPGTRSIRDIKEQEVYFGEIPLMTDNGTFIINGTERVIVSQLHRSPGVFYDHDKGKTHSSGKVLYSARVIPYRGSWLDFEFDHKDILYVRIDRRRKMPATVLLKALGYSNDALINYFYKSEDVKVGDNGSMTKIADAELLSNQKATADIVDPATGEVILKANRKFTKAAIRKMSEHGIKEIPISEEEVVGKVASHDIYDPATGEIIVECNEELTQAKLEEIIQKGITTFQVLFIDNLHVTSSFRDTILIDKIGSTDEALIEIYRRLRPGDPPTLKSALVLFENLFFNAERYDLSAVGRLKLNYKLGVDVPLDCMTLTREDILEVVRYLIELKNGKGNIDDIDHLGNRRVRAVGELLENQYRIGLVRMERAIKERMSLQEVENLMPHDLINSKPVSAVVKEFFGSSQLSQFMDQTNPLSEVTHKRRLSALGPGGLTRERAGFEVRDVHPTHYGRVCPIETPEGPNIGLIASLSTYARINEHGFVETPYRVVKEGRVTDEVRFFSALEEEGHAIAQANAEIDETGRFAADYISARKSGEFVLVGRDELELMDVAPMQLVSVAASLIPFLENDDANRALMGSNMQRQAVPLLRADSPLVGTGMERVVARDSGVSLVARHNGVVESVDASRIVVKIDEDQYDATGTGVDIYNLIKFARSNQNTCINQRPLVKVGDHVTAGDIIADGPSTDMGELALGQNVLIAFMPWGGYNYEDSILISERLVKDDRYTSIHIEEFEAVARDTKLGKEEITSDIPNLGEETLKDLDESGIIRIGAEVRPGDILVGKITPKGETQLSPEEKLLRAIFGEKAGDVRDTSLRVPPGVEGTVIGAKIFSRKGADKDARTEIIEKAEEMRLRKDEQDEIRIIRDSAIGKLKKLLVGKTAAVKIEGTDGKVLIPKGAAITEEMLKSFSMDRWDEISIADDDTVDEKVAQTLSTLNQQIDIIKYVFDDKVQKLRRGDDLPPGVIKMVKVYIAIKRKLQVGDKMAGRHGNKGVVSRILPEEDMPYMEDGRPVEIVLNPLGVPSRMNVGQILEMHLGWAAKGLGWKIEEFLDKNAPHDEIKRFLKGAYNNPDMDRFLDKLEGEELLNVAKRLKRGVPMSSPVFEGASEESIQSMLSHAGFSTTGQVTLFDGKSGDKFMHQVTVGIMYFLKLHHLVDDKIHARSIGPYSLVTQQPLGGKAQFGGQRLGEMEVWAMEAYGAAYALQEFLTVKSDDVAGRTRMYEAIVKGKHTLEPGLPESFNVLIKELQSLGLDVELLEGDED.

The protein belongs to the RNA polymerase beta chain family. The RNAP catalytic core consists of 2 alpha, 1 beta, 1 beta' and 1 omega subunit. When a sigma factor is associated with the core the holoenzyme is formed, which can initiate transcription.

It catalyses the reaction RNA(n) + a ribonucleoside 5'-triphosphate = RNA(n+1) + diphosphate. Functionally, DNA-dependent RNA polymerase catalyzes the transcription of DNA into RNA using the four ribonucleoside triphosphates as substrates. The sequence is that of DNA-directed RNA polymerase subunit beta from Geobacter sp. (strain M21).